The chain runs to 293 residues: Ribosomal protein L11 methyltransferase (293 aa).

4 residues coordinate S-adenosyl-L-methionine: T145, G166, D188, and N230.

Belongs to the methyltransferase superfamily. PrmA family.

The protein localises to the cytoplasm. It catalyses the reaction L-lysyl-[protein] + 3 S-adenosyl-L-methionine = N(6),N(6),N(6)-trimethyl-L-lysyl-[protein] + 3 S-adenosyl-L-homocysteine + 3 H(+). Methylates ribosomal protein L11. In Klebsiella pneumoniae subsp. pneumoniae (strain ATCC 700721 / MGH 78578), this protein is Ribosomal protein L11 methyltransferase.